Consider the following 199-residue polypeptide: V-type proton ATPase subunit E (199 aa).

This sequence belongs to the V-ATPase E subunit family.

In terms of biological role, produces ATP from ADP in the presence of a proton gradient across the membrane. This is V-type proton ATPase subunit E from Clostridium botulinum (strain Okra / Type B1).